The primary structure comprises 746 residues: Exostosin-1 (746 aa).

The Cytoplasmic segment spans residues 1–7 (MQAKKRY). Residues 8-28 (FILLSAGSCLALLFYFGGLQF) traverse the membrane as a helical; Signal-anchor for type II membrane protein segment. Topologically, residues 29–746 (RASRSHSRRE…RKKYRDIERL (718 aa)) are lumenal. An N-linked (GlcNAc...) asparagine glycan is attached at asparagine 89. 2 cysteine pairs are disulfide-bonded: cysteine 98-cysteine 103 and cysteine 109-cysteine 152. The a protein site is built by leucine 166 and tyrosine 203. The UDP site is built by lysine 267, lysine 269, tyrosine 271, and arginine 280. A disulfide bond links cysteine 298 and cysteine 312. Histidine 300 is an a protein binding site. UDP is bound by residues tyrosine 319 and tyrosine 324. Asparagine 330 is a glycosylation site (N-linked (GlcNAc...) asparagine). 2 disulfides stabilise this stretch: cysteine 334–cysteine 355 and cysteine 652–cysteine 704. UDP is bound by residues arginine 346 and glutamate 349.

This sequence belongs to the glycosyltransferase 47 family. In terms of assembly, part of the heparan sulfate polymerase, a dimeric complex composed of EXT1 and EXT2. Could also form homooligomeric complexes. Interacts with NDST1. Post-translationally, N-glycosylated.

Its subcellular location is the golgi apparatus membrane. It localises to the golgi apparatus. The protein localises to the cis-Golgi network membrane. It is found in the endoplasmic reticulum membrane. The enzyme catalyses 3-O-{alpha-D-GlcNAc-[(1-&gt;4)-beta-D-GlcA-(1-&gt;4)-alpha-D-GlcNAc](n)-(1-&gt;4)-beta-D-GlcA-(1-&gt;3)-beta-D-Gal-(1-&gt;3)-beta-D-Gal-(1-&gt;4)-beta-D-Xyl}-L-seryl-[protein] + UDP-alpha-D-glucuronate = 3-O-{[(1-&gt;4)-beta-D-GlcA-(1-&gt;4)-alpha-D-GlcNAc](n+1)-(1-&gt;4)-beta-D-GlcA-(1-&gt;3)-beta-D-Gal-(1-&gt;3)-beta-D-Gal-(1-&gt;4)-beta-D-Xyl}-L-seryl-[protein] + UDP + H(+). Its pathway is protein modification; protein glycosylation. Its function is as follows. Glycosyltransferase forming with EXT2 the heterodimeric heparan sulfate polymerase which catalyzes the elongation of the heparan sulfate glycan backbone. Glycan backbone extension consists in the alternating transfer of (1-&gt;4)-beta-D-GlcA and (1-&gt;4)-alpha-D-GlcNAc residues from their respective UDP-sugar donors. Both EXT1 and EXT2 are required for the full activity of the polymerase since EXT1 bears the N-acetylglucosaminyl-proteoglycan 4-beta-glucuronosyltransferase activity within the complex while EXT2 carries the glucuronosyl-N-acetylglucosaminyl-proteoglycan 4-alpha-N-acetylglucosaminyltransferase activity. Heparan sulfate proteoglycans are ubiquitous components of the extracellular matrix and play an important role in tissue homeostasis and signaling. This chain is Exostosin-1 (EXT1), found in Papio anubis (Olive baboon).